A 384-amino-acid chain; its full sequence is Probable UDP-galactopyranose mutase (384 aa).

The first 19 residues, 1 to 19 (MNNKNIMIVGAGFSGVVIA), serve as a signal peptide directing secretion. Residues Ser-14, 33–34 (DR), Asn-41, and 60–61 (HI) each bind FAD. UDP-alpha-D-galactose contacts are provided by Asn-84, Phe-151, Thr-156, Trp-160, and Tyr-185. An FAD-binding site is contributed by Phe-219. UDP-alpha-D-galactose contacts are provided by Asn-270, Arg-280, and Tyr-314. Arg-343 contacts FAD. Residue Tyr-349 participates in UDP-alpha-D-galactose binding. Residue 350–355 (LDMDVT) participates in FAD binding.

The protein belongs to the UDP-galactopyranose/dTDP-fucopyranose mutase family. As to quaternary structure, homodimer. The cofactor is FAD.

The enzyme catalyses UDP-alpha-D-galactose = UDP-alpha-D-galactofuranose. It participates in bacterial outer membrane biogenesis; LPS O-antigen biosynthesis. Its function is as follows. Catalyzes the interconversion through a 2-keto intermediate of uridine diphosphogalactopyranose (UDP-GalP) into uridine diphosphogalactofuranose (UDP-GalF). The protein is Probable UDP-galactopyranose mutase (rfbD) of Klebsiella pneumoniae.